We begin with the raw amino-acid sequence, 128 residues long: Fluoride-specific ion channel FluC (128 aa).

4 helical membrane-spanning segments follow: residues 4–24, 37–57, 63–83, and 99–119; these read LILA…RYLI, PYGT…IMDI, LISG…LTTF, and ILMG…GVII. Na(+) is bound by residues Gly78 and Thr81.

This sequence belongs to the fluoride channel Fluc/FEX (TC 1.A.43) family.

It is found in the cell membrane. The enzyme catalyses fluoride(in) = fluoride(out). Its activity is regulated as follows. Na(+) is not transported, but it plays an essential structural role and its presence is essential for fluoride channel function. Its function is as follows. Fluoride-specific ion channel. Important for reducing fluoride concentration in the cell, thus reducing its toxicity. This is Fluoride-specific ion channel FluC from Clostridium novyi (strain NT).